The sequence spans 86 residues: UPF0473 protein Clos_1662 (86 aa).

This sequence belongs to the UPF0473 family.

This Alkaliphilus oremlandii (strain OhILAs) (Clostridium oremlandii (strain OhILAs)) protein is UPF0473 protein Clos_1662.